Consider the following 633-residue polypeptide: Phosphomethylpyrimidine synthase (633 aa).

Residues Asn245, Met274, Tyr303, His339, 359-361, 400-403, and Glu439 each bind substrate; these read SRG and DGLR. His443 serves as a coordination point for Zn(2+). Tyr466 serves as a coordination point for substrate. His507 contacts Zn(2+). 3 residues coordinate [4Fe-4S] cluster: Cys587, Cys590, and Cys595.

It belongs to the ThiC family. In terms of assembly, homodimer. [4Fe-4S] cluster serves as cofactor.

It carries out the reaction 5-amino-1-(5-phospho-beta-D-ribosyl)imidazole + S-adenosyl-L-methionine = 4-amino-2-methyl-5-(phosphooxymethyl)pyrimidine + CO + 5'-deoxyadenosine + formate + L-methionine + 3 H(+). The protein operates within cofactor biosynthesis; thiamine diphosphate biosynthesis. Its function is as follows. Catalyzes the synthesis of the hydroxymethylpyrimidine phosphate (HMP-P) moiety of thiamine from aminoimidazole ribotide (AIR) in a radical S-adenosyl-L-methionine (SAM)-dependent reaction. The protein is Phosphomethylpyrimidine synthase of Neisseria meningitidis serogroup A / serotype 4A (strain DSM 15465 / Z2491).